The chain runs to 39 residues: Bomanin Short 3 (39 aa).

The signal sequence occupies residues Met-1–Ala-18. Residues Thr-19–Pro-23 constitute a propeptide that is removed on maturation. A disulfide bond links Cys-32 and Cys-35.

This sequence belongs to the bomanin family. As to expression, hemolymph (at protein level).

Its subcellular location is the secreted. Secreted immune-induced peptide induced by Toll signaling. Has a role in resistance bacterial and fungal infections. The strength of antimicrobial activity appears to correlate with the overall level of expression. Has no activity against the fungus C.glabrata in vitro. In Drosophila melanogaster (Fruit fly), this protein is Bomanin Short 3.